Consider the following 698-residue polypeptide: UvrABC system protein B (698 aa).

A Helicase ATP-binding domain is found at 25–183 (NGLNSGLVHQ…TLIDLQFERN (159 aa)). Residue 38–45 (GATGTGKT) participates in ATP binding. Residues 91–114 (YYDAYTPEAYVPSKDLYIEKEAQI) carry the Beta-hairpin motif. The Helicase C-terminal domain maps to 428–594 (QIDDLLGEIK…GIVKAVRDLT (167 aa)). Residues 622–657 (FKVINALEKQMKQAAKDLEFEKAALLRDQLTEMRQT) enclose the UVR domain.

It belongs to the UvrB family. As to quaternary structure, forms a heterotetramer with UvrA during the search for lesions. Interacts with UvrC in an incision complex.

It is found in the cytoplasm. Functionally, the UvrABC repair system catalyzes the recognition and processing of DNA lesions. A damage recognition complex composed of 2 UvrA and 2 UvrB subunits scans DNA for abnormalities. Upon binding of the UvrA(2)B(2) complex to a putative damaged site, the DNA wraps around one UvrB monomer. DNA wrap is dependent on ATP binding by UvrB and probably causes local melting of the DNA helix, facilitating insertion of UvrB beta-hairpin between the DNA strands. Then UvrB probes one DNA strand for the presence of a lesion. If a lesion is found the UvrA subunits dissociate and the UvrB-DNA preincision complex is formed. This complex is subsequently bound by UvrC and the second UvrB is released. If no lesion is found, the DNA wraps around the other UvrB subunit that will check the other stand for damage. In Herpetosiphon aurantiacus (strain ATCC 23779 / DSM 785 / 114-95), this protein is UvrABC system protein B.